We begin with the raw amino-acid sequence, 137 residues long: Nucleoside diphosphate kinase (137 aa).

ATP contacts are provided by Lys-9, Phe-57, Arg-85, Thr-91, Arg-102, and Asn-112. Catalysis depends on His-115, which acts as the Pros-phosphohistidine intermediate.

This sequence belongs to the NDK family. In terms of assembly, homotetramer. The cofactor is Mg(2+).

The protein localises to the cytoplasm. The enzyme catalyses a 2'-deoxyribonucleoside 5'-diphosphate + ATP = a 2'-deoxyribonucleoside 5'-triphosphate + ADP. The catalysed reaction is a ribonucleoside 5'-diphosphate + ATP = a ribonucleoside 5'-triphosphate + ADP. Major role in the synthesis of nucleoside triphosphates other than ATP. The ATP gamma phosphate is transferred to the NDP beta phosphate via a ping-pong mechanism, using a phosphorylated active-site intermediate. The polypeptide is Nucleoside diphosphate kinase (Desulfotalea psychrophila (strain LSv54 / DSM 12343)).